The primary structure comprises 495 residues: Probable cytosol aminopeptidase (495 aa).

The Mn(2+) site is built by Lys-266 and Asp-271. Lys-278 is an active-site residue. Residues Asp-289, Asp-348, and Glu-350 each contribute to the Mn(2+) site. Arg-352 is an active-site residue.

The protein belongs to the peptidase M17 family. Mn(2+) serves as cofactor.

The protein resides in the cytoplasm. The catalysed reaction is Release of an N-terminal amino acid, Xaa-|-Yaa-, in which Xaa is preferably Leu, but may be other amino acids including Pro although not Arg or Lys, and Yaa may be Pro. Amino acid amides and methyl esters are also readily hydrolyzed, but rates on arylamides are exceedingly low.. It catalyses the reaction Release of an N-terminal amino acid, preferentially leucine, but not glutamic or aspartic acids.. Presumably involved in the processing and regular turnover of intracellular proteins. Catalyzes the removal of unsubstituted N-terminal amino acids from various peptides. This Pseudomonas paraeruginosa (strain DSM 24068 / PA7) (Pseudomonas aeruginosa (strain PA7)) protein is Probable cytosol aminopeptidase.